Consider the following 506-residue polypeptide: Glutamate--tRNA ligase (506 aa).

The 'HIGH' region signature appears at 21–31; the sequence is PSPTGTPHVGM. The 'KMSKS' region motif lies at 265–269; that stretch reads KLSKR. Lys-268 lines the ATP pocket.

The protein belongs to the class-I aminoacyl-tRNA synthetase family. Glutamate--tRNA ligase type 1 subfamily. In terms of assembly, monomer.

The protein localises to the cytoplasm. It carries out the reaction tRNA(Glu) + L-glutamate + ATP = L-glutamyl-tRNA(Glu) + AMP + diphosphate. Functionally, catalyzes the attachment of glutamate to tRNA(Glu) in a two-step reaction: glutamate is first activated by ATP to form Glu-AMP and then transferred to the acceptor end of tRNA(Glu). In Bifidobacterium longum (strain DJO10A), this protein is Glutamate--tRNA ligase.